The primary structure comprises 295 residues: Small ribosomal subunit protein uS2 (295 aa).

This sequence belongs to the universal ribosomal protein uS2 family.

The polypeptide is Small ribosomal subunit protein uS2 (Rickettsia typhi (strain ATCC VR-144 / Wilmington)).